The sequence spans 137 residues: Universal stress protein HP_0031 (137 aa).

This sequence belongs to the universal stress protein A family.

This Helicobacter pylori (strain ATCC 700392 / 26695) (Campylobacter pylori) protein is Universal stress protein HP_0031.